Here is a 555-residue protein sequence, read N- to C-terminus: Methionine--tRNA ligase (555 aa).

Residues 13–23 (PYANGSLHIGH) carry the 'HIGH' region motif. C144, C147, C157, and C160 together coordinate Zn(2+). Residues 330 to 334 (KISKS) carry the 'KMSKS' region motif. K333 lines the ATP pocket.

Belongs to the class-I aminoacyl-tRNA synthetase family. MetG type 1 subfamily. Monomer. The cofactor is Zn(2+).

The protein localises to the cytoplasm. It catalyses the reaction tRNA(Met) + L-methionine + ATP = L-methionyl-tRNA(Met) + AMP + diphosphate. Its function is as follows. Is required not only for elongation of protein synthesis but also for the initiation of all mRNA translation through initiator tRNA(fMet) aminoacylation. The sequence is that of Methionine--tRNA ligase from Blochmanniella pennsylvanica (strain BPEN).